A 339-amino-acid chain; its full sequence is Phosphate acyltransferase (339 aa).

It belongs to the PlsX family. As to quaternary structure, homodimer. Probably interacts with PlsY.

It localises to the cytoplasm. It carries out the reaction a fatty acyl-[ACP] + phosphate = an acyl phosphate + holo-[ACP]. Its pathway is lipid metabolism; phospholipid metabolism. In terms of biological role, catalyzes the reversible formation of acyl-phosphate (acyl-PO(4)) from acyl-[acyl-carrier-protein] (acyl-ACP). This enzyme utilizes acyl-ACP as fatty acyl donor, but not acyl-CoA. The polypeptide is Phosphate acyltransferase (Helicobacter pylori (strain J99 / ATCC 700824) (Campylobacter pylori J99)).